The following is a 60-amino-acid chain: Potassium channel toxin alpha-KTx 15.9 (60 aa).

An N-terminal signal peptide occupies residues 1–22 (MKIFLPVLVMLILCSMCLLTEG). Cystine bridges form between Cys-30–Cys-51, Cys-36–Cys-56, and Cys-40–Cys-58.

Belongs to the short scorpion toxin superfamily. Potassium channel inhibitor family. Alpha-KTx 15 subfamily. As to expression, expressed by the venom gland.

The protein resides in the secreted. Its function is as follows. Blocker of A-type voltage-gated potassium channels of cerebellar granular cells. May also inhibit Kv4/KCND when coexpressed with DPP6 or DPP10. The occlusion of the outer entry of the K(+) conducting pore is partially reversible and affects both open and closed channels. It shares the same target in rat brain than BmTX3 (AC Q8I0L5) and AmmTX3 (AC P60208). Has been shown to weakly inhibit TRPV1 channels. The sequence is that of Potassium channel toxin alpha-KTx 15.9 from Lychas mucronatus (Chinese swimming scorpion).